Consider the following 705-residue polypeptide: Putative membrane protein SCO0839 (705 aa).

The next 12 membrane-spanning stretches (helical) occupy residues 16–36 (WLVP…LGPY), 177–197 (GIDG…LLLV), 202–222 (LLPL…CAIV), 237–257 (VQGI…LLLT), 281–301 (SWGA…ALLL), 316–336 (IGIV…LVLL), 373–393 (IWAL…TLSS), 529–549 (LIVP…LRSL), 554–574 (LLVA…ALVF), 587–607 (VPLY…IFLM), 627–647 (LTAT…TFAA), and 648–668 (LGVI…FGVL).

The protein belongs to the resistance-nodulation-cell division (RND) (TC 2.A.6) family. MmpL subfamily.

The protein resides in the cell membrane. This chain is Putative membrane protein SCO0839, found in Streptomyces coelicolor (strain ATCC BAA-471 / A3(2) / M145).